Consider the following 198-residue polypeptide: ATP-dependent Clp protease proteolytic subunit (198 aa).

The active-site Nucleophile is S98. H123 is an active-site residue.

Belongs to the peptidase S14 family. As to quaternary structure, fourteen ClpP subunits assemble into 2 heptameric rings which stack back to back to give a disk-like structure with a central cavity, resembling the structure of eukaryotic proteasomes.

It is found in the cytoplasm. It carries out the reaction Hydrolysis of proteins to small peptides in the presence of ATP and magnesium. alpha-casein is the usual test substrate. In the absence of ATP, only oligopeptides shorter than five residues are hydrolyzed (such as succinyl-Leu-Tyr-|-NHMec, and Leu-Tyr-Leu-|-Tyr-Trp, in which cleavage of the -Tyr-|-Leu- and -Tyr-|-Trp bonds also occurs).. Its function is as follows. Cleaves peptides in various proteins in a process that requires ATP hydrolysis. Has a chymotrypsin-like activity. Plays a major role in the degradation of misfolded proteins. The chain is ATP-dependent Clp protease proteolytic subunit from Halothermothrix orenii (strain H 168 / OCM 544 / DSM 9562).